Consider the following 373-residue polypeptide: Protein-glutamate methylesterase/protein-glutamine glutaminase 1 (373 aa).

The 118-residue stretch at 16-133 folds into the Response regulatory domain; the sequence is RVVVVDDSAL…ASGLTELSDQ (118 aa). Asp67 bears the 4-aspartylphosphate mark. Residues 175–367 form the CheB-type methylesterase domain; that stretch reads RVSTEKLICI…PALIAKLSSA (193 aa). Active-site residues include Ser187, His213, and Asp309.

This sequence belongs to the CheB family. Phosphorylated by CheA. Phosphorylation of the N-terminal regulatory domain activates the methylesterase activity.

The protein localises to the cytoplasm. It carries out the reaction [protein]-L-glutamate 5-O-methyl ester + H2O = L-glutamyl-[protein] + methanol + H(+). It catalyses the reaction L-glutaminyl-[protein] + H2O = L-glutamyl-[protein] + NH4(+). In terms of biological role, involved in chemotaxis. Part of a chemotaxis signal transduction system that modulates chemotaxis in response to various stimuli. Catalyzes the demethylation of specific methylglutamate residues introduced into the chemoreceptors (methyl-accepting chemotaxis proteins or MCP) by CheR. Also mediates the irreversible deamidation of specific glutamine residues to glutamic acid. This chain is Protein-glutamate methylesterase/protein-glutamine glutaminase 1, found in Albidiferax ferrireducens (strain ATCC BAA-621 / DSM 15236 / T118) (Rhodoferax ferrireducens).